Consider the following 364-residue polypeptide: Oxidized low-density lipoprotein receptor 1 (364 aa).

Residues 1–21 form a disordered region; sequence MAFDDKMKPVNGQPDQKSCGK. Topologically, residues 1–31 are cytoplasmic; it reads MAFDDKMKPVNGQPDQKSCGKKPKGLHLLSS. Residues 32 to 54 form a helical; Signal-anchor for type II membrane protein membrane-spanning segment; sequence TWWCPAAVTLAILCLVLSVTLIV. Residues C35 and C45 are each lipidated (S-palmitoyl cysteine). The interval 55 to 242 is neck; that stretch reads QQTQLLQVSD…GPCPQDWIWH (188 aa). At 55 to 364 the chain is on the extracellular side; the sequence is QQTQLLQVSD…QKKANLLLTQ (310 aa). N-linked (GlcNAc...) asparagine glycans are attached at residues N72, N92, and N138. The stretch at 83–233 forms a coiled coil; sequence QMSAQKKAEN…ALQRAANSSG (151 aa). Tandem repeats lie at residues 96-141, 142-187, and 188-233. 3 disulfide bridges follow: C235–C246, C262–C354, and C333–C346. The 114-residue stretch at 242–355 folds into the C-type lectin domain; sequence HKENCYLFHG…CILTAFSICQ (114 aa).

In terms of assembly, homodimer; disulfide-linked. May form a hexamer composed of 3 homodimers. Interacts with HSP70. In terms of processing, N-glycosylated. As to expression, predominantly expressed in lung and at lower level in kidney. Expressed in macrophages but not in vascular smooth muscle cells.

The protein localises to the cell membrane. The protein resides in the membrane raft. It localises to the secreted. Functionally, receptor that mediates the recognition, internalization and degradation of oxidatively modified low density lipoprotein (oxLDL) by vascular endothelial cells. OxLDL is a marker of atherosclerosis that induces vascular endothelial cell activation and dysfunction, resulting in pro-inflammatory responses, pro-oxidative conditions and apoptosis. Its association with oxLDL induces the activation of NF-kappa-B through an increased production of intracellular reactive oxygen and a variety of pro-atherogenic cellular responses including a reduction of nitric oxide (NO) release, monocyte adhesion and apoptosis. In addition to binding oxLDL, it acts as a receptor for the HSP70 protein involved in antigen cross-presentation to naive T-cells in dendritic cells, thereby participating in cell-mediated antigen cross-presentation. Also involved in inflammatory process, by acting as a leukocyte-adhesion molecule at the vascular interface in endotoxin-induced inflammation. Also acts as a receptor for advanced glycation end (AGE) products, activated platelets, monocytes, apoptotic cells and both Gram-negative and Gram-positive bacteria. The chain is Oxidized low-density lipoprotein receptor 1 (Olr1) from Rattus norvegicus (Rat).